The following is a 311-amino-acid chain: tRNA dimethylallyltransferase (311 aa).

14 to 21 (GPTAVGKT) contributes to the ATP binding site. 16 to 21 (TAVGKT) contributes to the substrate binding site. An interaction with substrate tRNA region spans residues 39 to 42 (DSMQ).

The protein belongs to the IPP transferase family. As to quaternary structure, monomer. It depends on Mg(2+) as a cofactor.

It carries out the reaction adenosine(37) in tRNA + dimethylallyl diphosphate = N(6)-dimethylallyladenosine(37) in tRNA + diphosphate. Catalyzes the transfer of a dimethylallyl group onto the adenine at position 37 in tRNAs that read codons beginning with uridine, leading to the formation of N6-(dimethylallyl)adenosine (i(6)A). This is tRNA dimethylallyltransferase from Lactiplantibacillus plantarum (strain ATCC BAA-793 / NCIMB 8826 / WCFS1) (Lactobacillus plantarum).